A 207-amino-acid chain; its full sequence is Ras-related protein Rab7 (207 aa).

GTP contacts are provided by residues glycine 15–threonine 22, aspartate 63–glutamine 67, and asparagine 125–aspartate 128. S-geranylgeranyl cysteine attachment occurs at residues cysteine 205 and cysteine 207. At cysteine 207 the chain carries Cysteine methyl ester.

It belongs to the small GTPase superfamily. Rab family.

The protein resides in the cell membrane. Its function is as follows. Protein transport. Probably involved in vesicular traffic. The polypeptide is Ras-related protein Rab7 (Prunus armeniaca (Apricot)).